A 422-amino-acid chain; its full sequence is Dihydrolipoyllysine-residue succinyltransferase component of 2-oxoglutarate dehydrogenase complex (422 aa).

The Lipoyl-binding domain maps to 1–76 (MPEVKVPELA…EVGQAIAVIG (76 aa)). Position 42 is an N6-lipoyllysine (Lys42). Residues 77-184 (EGSGNASKEN…APAKEEKKYN (108 aa)) form a disordered region. Polar residues-rich tracts occupy residues 80–94 (GNAS…TPQQ) and 114–130 (EVNQ…NATP). Positions 127 to 163 (NATPSARRYARENGVNLAEVSPKTNDVVRKEDIDKKQ) constitute a Peripheral subunit-binding (PSBD) domain. A compositionally biased stretch (basic and acidic residues) spans 152 to 163 (DVVRKEDIDKKQ). A compositionally biased stretch (low complexity) spans 164–176 (QAPASTQTTQQAP). Active-site residues include His393 and Asp397.

This sequence belongs to the 2-oxoacid dehydrogenase family. Forms a 24-polypeptide structural core with octahedral symmetry. Part of the 2-oxoglutarate dehydrogenase (OGDH) complex composed of E1 (2-oxoglutarate dehydrogenase), E2 (dihydrolipoamide succinyltransferase) and E3 (dihydrolipoamide dehydrogenase); the complex contains multiple copies of the three enzymatic components (E1, E2 and E3). It depends on (R)-lipoate as a cofactor.

The catalysed reaction is N(6)-[(R)-dihydrolipoyl]-L-lysyl-[protein] + succinyl-CoA = N(6)-[(R)-S(8)-succinyldihydrolipoyl]-L-lysyl-[protein] + CoA. The protein operates within amino-acid degradation; L-lysine degradation via saccharopine pathway; glutaryl-CoA from L-lysine: step 6/6. E2 component of the 2-oxoglutarate dehydrogenase (OGDH) complex which catalyzes the second step in the conversion of 2-oxoglutarate to succinyl-CoA and CO(2). The polypeptide is Dihydrolipoyllysine-residue succinyltransferase component of 2-oxoglutarate dehydrogenase complex (odhB) (Staphylococcus aureus (strain bovine RF122 / ET3-1)).